The sequence spans 336 residues: HTH-type transcriptional repressor PurR (336 aa).

In terms of domain architecture, HTH lacI-type spans Ala-2–Val-56. Positions Ile-4–Asn-23 form a DNA-binding region, H-T-H motif. The DNA-binding element occupies Ser-48–Val-56. Tyr-73, Lys-188, Thr-190, Phe-219, and Asp-273 together coordinate hypoxanthine.

In terms of assembly, homodimer.

The protein operates within purine metabolism; purine nucleotide biosynthesis [regulation]. Is the main repressor of the genes involved in the de novo synthesis of purine nucleotides, regulating purB, purC, purEK, purF, purHD, purL, purMN and guaBA expression. PurR is allosterically activated to bind its cognate DNA by binding the purine corepressors, hypoxanthine or guanine, thereby effecting transcription repression. This chain is HTH-type transcriptional repressor PurR, found in Haemophilus influenzae (strain ATCC 51907 / DSM 11121 / KW20 / Rd).